The chain runs to 427 residues: Serine hydroxymethyltransferase (427 aa).

(6S)-5,6,7,8-tetrahydrofolate-binding positions include L118 and 122 to 124; that span reads GHL. Residue K227 is modified to N6-(pyridoxal phosphate)lysine. Residues E243 and 351–353 each bind (6S)-5,6,7,8-tetrahydrofolate; that span reads SPF.

Belongs to the SHMT family. As to quaternary structure, homodimer. Pyridoxal 5'-phosphate serves as cofactor.

It is found in the cytoplasm. It catalyses the reaction (6R)-5,10-methylene-5,6,7,8-tetrahydrofolate + glycine + H2O = (6S)-5,6,7,8-tetrahydrofolate + L-serine. The protein operates within one-carbon metabolism; tetrahydrofolate interconversion. Its pathway is amino-acid biosynthesis; glycine biosynthesis; glycine from L-serine: step 1/1. Its function is as follows. Catalyzes the reversible interconversion of serine and glycine with tetrahydrofolate (THF) serving as the one-carbon carrier. This reaction serves as the major source of one-carbon groups required for the biosynthesis of purines, thymidylate, methionine, and other important biomolecules. Also exhibits THF-independent aldolase activity toward beta-hydroxyamino acids, producing glycine and aldehydes, via a retro-aldol mechanism. This chain is Serine hydroxymethyltransferase, found in Thermotoga maritima (strain ATCC 43589 / DSM 3109 / JCM 10099 / NBRC 100826 / MSB8).